Reading from the N-terminus, the 521-residue chain is Membrane-bound transcription factor site-2 protease (521 aa).

Over 1 to 3 the chain is Cytoplasmic; it reads MIP. A helical membrane pass occupies residues 4-24; that stretch reads VSLVVVVVGGWTVVYLTDLVL. Residues 25-74 are Lumenal-facing; it reads KSSVYFKHSYEDWLESNGLSISPFHIRWQTAVFNRAFYSWGRRKARMLYQ. A run of 2 helical transmembrane segments spans residues 75-95 and 96-107; these read WFNF…FLLG and KTLMQTLAQMMA. Over 108-146 the chain is Lumenal; it reads DSPSSYSSSSSSSSSSSSSSSSSSSSSSSSSLHNEQVLQ. The segment at 113 to 137 is disordered; the sequence is YSSSSSSSSSSSSSSSSSSSSSSSS. Residues 147–171 traverse the membrane as a helical segment; it reads VVVPGINLPVNQLTYFFAAVLISGV. Zn(2+) is bound at residue His173. The active site involves Glu174. 3 helical membrane passes run 176-188, 189-211, and 231-253; these read GHGI…QVRF, NGFG…TTHL, and FVLA…PFYY. Residue His177 coordinates Zn(2+). Residues 254 to 448 lie on the Lumenal side of the membrane; the sequence is TGVGVLITEV…LPVVVETFVK (195 aa). A glycan (N-linked (GlcNAc...) asparagine) is linked at Asn339. 2 helical membrane passes run 449–466 and 467–478; these read YLIS…VPCF and ALDGQWILNSFL. Residues 479-494 are Lumenal-facing; sequence DATLTSVIGDNDVKDL. A helical transmembrane segment spans residues 495–515; sequence IGFFILLGGSVLLAANVTLGL. At 516–521 the chain is on the cytoplasmic side; it reads WMVTAR.

Belongs to the peptidase M50A family. It depends on Zn(2+) as a cofactor.

It is found in the membrane. It localises to the cytoplasm. Its subcellular location is the golgi apparatus membrane. The enzyme catalyses Cleaves several transcription factors that are type-2 transmembrane proteins within membrane-spanning domains. Known substrates include sterol regulatory element-binding protein (SREBP) -1, SREBP-2 and forms of the transcriptional activator ATF6. SREBP-2 is cleaved at the site 477-DRSRILL-|-CVLTFLCLSFNPLTSLLQWGGA-505. The residues Asn-Pro, 11 residues distal to the site of cleavage in the membrane-spanning domain, are important for cleavage by S2P endopeptidase. Replacement of either of these residues does not prevent cleavage, but there is no cleavage if both of these residues are replaced.. Zinc metalloprotease that mediates intramembrane proteolysis of proteins such as ATF6, ATF6B, SREBF1/SREBP1 and SREBF2/SREBP2. Catalyzes the second step in the proteolytic activation of the sterol regulatory element-binding proteins (SREBPs) SREBF1/SREBP1 and SREBF2/SREBP2: cleaves SREBPs within the first transmembrane segment, thereby releasing the N-terminal segment with a portion of the transmembrane segment attached. Mature N-terminal SREBP fragments shuttle to the nucleus and activate gene transcription. Also mediates the second step in the proteolytic activation of the cyclic AMP-dependent transcription factor ATF-6 (ATF6 and ATF6B). Involved in intramembrane proteolysis during bone formation. In astrocytes and osteoblasts, upon DNA damage and ER stress, mediates the second step of the regulated intramembrane proteolytic activation of the transcription factor CREB3L1, leading to the inhibition of cell-cycle progression. This chain is Membrane-bound transcription factor site-2 protease (MBTPS2), found in Pongo abelii (Sumatran orangutan).